The primary structure comprises 38 residues: Beta-defensin 1 (38 aa).

Intrachain disulfides connect Cys5-Cys34, Cys12-Cys27, and Cys17-Cys35.

Belongs to the beta-defensin family. As to quaternary structure, monomer. Homodimer. In terms of tissue distribution, neutrophilic granules.

Its subcellular location is the secreted. The protein resides in the membrane. Its function is as follows. Has bactericidal activity. Active against E.coli ML35 but not against S.aureus 502A. May act as a ligand for C-C chemokine receptor CCR6. Positively regulates the sperm motility and bactericidal activity in a CCR6-dependent manner. Binds to CCR6 and triggers Ca2+ mobilization in the sperm which is important for its motility. This chain is Beta-defensin 1 (DEFB1), found in Bos taurus (Bovine).